The chain runs to 997 residues: Signal peptide, CUB and EGF-like domain-containing protein 2 (997 aa).

An N-terminal signal peptide occupies residues 1 to 28 (MGVAGCGRPREARALLLLLLLLPPLLAA). The EGF-like 1; calcium-binding domain occupies 43 to 83 (DVDECAQGLDDCHADALCQNTPTSYKCSCKPGYQGEGRQCE). Intrachain disulfides connect Cys47–Cys60, Cys54–Cys69, Cys71–Cys82, Cys88–Cys100, Cys96–Cys109, Cys111–Cys124, Cys130–Cys141, and Cys137–Cys150. The EGF-like 2; calcium-binding domain maps to 84-125 (DMDECDNTLNGGCVHDCLNIPGNYRCTCFDGFMLAHDGHNCL). One can recognise an EGF-like 3; calcium-binding domain in the interval 126–162 (DMDECLENNGGCQHICTNVIGSYECRCKEGFFLSDNQ). EGF-like domains follow at residues 175–211 (CMNKDHGCGHICKEAPRGSVACECRPGFELAKNQKDC), 215–250 (CNHGNGGCQHSCEDTAEGPECSCHPRYRLHADGRSC), and 284–319 (CAVNNGGCDRTCKDTSTGVHCSCPTGFTLQVDGKTC). In terms of domain architecture, EGF-like 7; calcium-binding spans 321 to 361 (DIDECQTRNGGCNHFCKNTVGSFDCSCKKGFKLLTDEKSCQ). Intrachain disulfides connect Cys325–Cys336, Cys332–Cys345, Cys347–Cys360, Cys366–Cys376, Cys372–Cys385, Cys387–Cys399, Cys405–Cys416, Cys412–Cys425, and Cys427–Cys440. One can recognise an EGF-like 8; calcium-binding domain in the interval 362–400 (DVDECSLERTCDHSCINHPGTFICACNPGYTLYSFTHCG). Residues 401–441 (DTNECSVNNGGCQQVCINTVGSYECQCHPGFKLHWNKKDCV) enclose the EGF-like 9; calcium-binding domain. Asn657 carries N-linked (GlcNAc...) asparagine glycosylation. Cys807 and Cys833 are disulfide-bonded. One can recognise a CUB domain in the interval 807-919 (CGGELGDFTG…RGFQVPYVTY (113 aa)). The interval 845-854 (ILIVVPEIFL) is interaction with the cholesterol-anchor of SHH. The cysteines at positions 860 and 881 are disulfide-linked.

In terms of assembly, interacts with SHH via the cholesterol anchor of the dually lipid-modified SHH (ShhNp). Interacts with PTCH1. Forms homooligomers and heterooligomers with SCUBE1 and SCUBE3. Interacts with VEGFR2. Post-translationally, N-glycosylated. In terms of tissue distribution, expressed in adult heart, lung and testis.

Its subcellular location is the secreted. The protein localises to the cell surface. In terms of biological role, lipid-binding protein required for SHH long-range signaling by binding to the dually lipid-modified SHH (ShhNp) and by promoting ShhNp mobilization, solubilization and release from the cell membrane. Acts by enhancing the proteolytic processing (shedding) of the lipid-modified N- and C- terminal of ShhNp at the cell surface. Synergizes with DISP1 to cause an increase in SHH secretion. Probable cell surface coreceptor for VEGFR2 involved in VEGFR2-mediated angiogenesis. The protein is Signal peptide, CUB and EGF-like domain-containing protein 2 of Mus musculus (Mouse).